The primary structure comprises 376 residues: Chaperone protein DnaJ (376 aa).

Residues 4–69 form the J domain; that stretch reads DFYETLGVQK…QKRAAYDRFG (66 aa). The CR-type zinc-finger motif lies at 133–211; sequence GKTAQIRVPA…CAGQGRVTEE (79 aa). Positions 146, 149, 163, 166, 185, 188, 199, and 202 each coordinate Zn(2+). CXXCXGXG motif repeat units follow at residues 146–153, 163–170, 185–192, and 199–206; these read CTECSGSG, CSMCHGHG, CPQCQGRG, and CPKCAGQG.

The protein belongs to the DnaJ family. In terms of assembly, homodimer. Requires Zn(2+) as cofactor.

Its subcellular location is the cytoplasm. Functionally, participates actively in the response to hyperosmotic and heat shock by preventing the aggregation of stress-denatured proteins and by disaggregating proteins, also in an autonomous, DnaK-independent fashion. Unfolded proteins bind initially to DnaJ; upon interaction with the DnaJ-bound protein, DnaK hydrolyzes its bound ATP, resulting in the formation of a stable complex. GrpE releases ADP from DnaK; ATP binding to DnaK triggers the release of the substrate protein, thus completing the reaction cycle. Several rounds of ATP-dependent interactions between DnaJ, DnaK and GrpE are required for fully efficient folding. Also involved, together with DnaK and GrpE, in the DNA replication of plasmids through activation of initiation proteins. This is Chaperone protein DnaJ from Mesorhizobium japonicum (strain LMG 29417 / CECT 9101 / MAFF 303099) (Mesorhizobium loti (strain MAFF 303099)).